A 95-amino-acid chain; its full sequence is uncharacterized protein (95 aa).

An N-terminal signal peptide occupies residues 1-22; it reads MLPGFTMIITSLLLTFFREVEH. At 23-52 the chain is on the extracellular side; the sequence is LLPECLTITNTPQRTLVLIQRFTLLQKVMT. Residues 53–69 traverse the membrane as a helical segment; sequence IHLLLSIGTLGSLFTLH. Residues 70-95 are Cytoplasmic-facing; sequence PQLLKTNLLQKLHKELNSNLDYLISC.

The protein localises to the host membrane. This is an uncharacterized protein from Acidianus bottle-shaped virus (isolate Italy/Pozzuoli) (ABV).